Reading from the N-terminus, the 278-residue chain is MSRTNFDTLLEAGCHFGHLKRKWNPAMAPYIFMERNGIHIIDLHKTVAKVDEAAEALKQIAKSGKKVLFVATKKQAKQVVAEKAASVNMPYVIERWPGGMLTNFPTIRKAVKKMTTIDKLTADGTYSNLSKREILQISRQRAKLDKTLGSIADLTRLPSALFVIDVMKENIAVREANRLGIPVFGIVDTNSDPTNIDFVIPANDDATKSVEVILDACCAAMIEGLEERKAEKIDMEAAGEAPANKGKKKSAKARLDKSDEEAINAAKAAAFLKEDEEA.

Residues Ile233–Ser258 are disordered.

It belongs to the universal ribosomal protein uS2 family.

This is Small ribosomal subunit protein uS2 from Bacteroides fragilis (strain ATCC 25285 / DSM 2151 / CCUG 4856 / JCM 11019 / LMG 10263 / NCTC 9343 / Onslow / VPI 2553 / EN-2).